Reading from the N-terminus, the 489-residue chain is 5'-AMP-activated protein kinase subunit gamma-3 (489 aa).

The disordered stretch occupies residues 1–95 (MEPELEHTLP…TRQEATFPKA (95 aa)). Over residues 32–47 (GENSWPSPAVATSSER) the composition is skewed to polar residues. 3 consecutive CBS domains span residues 197–258 (MATS…RSPL), 280–340 (CFKP…LLPR), and 355–415 (TFRD…HLDM). ADP is bound by residues arginine 225, 240–245 (MLTITD), valine 285, 306–307 (HR), and lysine 325. Residues arginine 225, 240–245 (MLTITD), valine 285, histidine 306, 306–307 (HR), lysine 325, threonine 355, alanine 360, 381–382 (SA), 397–400 (SRFD), arginine 424, leucine 432, histidine 453, 453–454 (HR), and 469–472 (SLSD) each bind AMP. Residues arginine 225, 240-245 (MLTITD), valine 285, 306-307 (HR), arginine 307, and lysine 325 each bind ATP. Positions 293-314 (LFEAVYALIKNRIHRLPVLDPV) match the AMPK pseudosubstrate motif. ADP-binding positions include 397–400 (SRFD), arginine 424, leucine 432, and 453–454 (HR). Residues 397 to 400 (SRFD), arginine 424, leucine 432, and 453 to 454 (HR) each bind ATP. The CBS 4 domain occupies 427–486 (CLEGVLSCQPHESLGEVIDRIAREQVHRLVLVDETQHLLGVVSLSDILQALVLSPAGIDA).

The protein belongs to the 5'-AMP-activated protein kinase gamma subunit family. AMPK is a heterotrimer of an alpha catalytic subunit (PRKAA1 or PRKAA2), a beta (PRKAB1 or PRKAB2) and a gamma non-catalytic subunits (PRKAG1, PRKAG2 or PRKAG3). Interacts with FNIP1 and FNIP2. Phosphorylated by ULK1; leading to negatively regulate AMPK activity and suggesting the existence of a regulatory feedback loop between ULK1 and AMPK. Post-translationally, glycosylated; O-GlcNAcylated by OGT, promoting the AMP-activated protein kinase (AMPK) activity.

AMP/ATP-binding subunit of AMP-activated protein kinase (AMPK), an energy sensor protein kinase that plays a key role in regulating cellular energy metabolism. In response to reduction of intracellular ATP levels, AMPK activates energy-producing pathways and inhibits energy-consuming processes: inhibits protein, carbohydrate and lipid biosynthesis, as well as cell growth and proliferation. AMPK acts via direct phosphorylation of metabolic enzymes, and by longer-term effects via phosphorylation of transcription regulators. AMPK also acts as a regulator of cellular polarity by remodeling the actin cytoskeleton; probably by indirectly activating myosin. The AMPK gamma3 subunit is a non-catalytic subunit with a regulatory role in muscle energy metabolism. It mediates binding to AMP, ADP and ATP, leading to AMPK activation or inhibition: AMP-binding results in allosteric activation of alpha catalytic subunit (PRKAA1 or PRKAA2) both by inducing phosphorylation and preventing dephosphorylation of catalytic subunits. ADP also stimulates phosphorylation, without stimulating already phosphorylated catalytic subunit. ATP promotes dephosphorylation of catalytic subunit, rendering the AMPK enzyme inactive. The protein is 5'-AMP-activated protein kinase subunit gamma-3 (Prkag3) of Mus musculus (Mouse).